A 974-amino-acid chain; its full sequence is Receptor-like protein 7 (974 aa).

The N-terminal stretch at Met1 to Ala24 is a signal peptide. The Extracellular segment spans residues Thr25–Trp930. N-linked (GlcNAc...) asparagine glycans are attached at residues Asn54 and Asn90. LRR repeat units lie at residues Leu96 to Lys120, Thr122 to Leu145, Lys147 to Tyr166, Leu181 to Asn204, Arg206 to Ile229, and Pro230 to Glu252. Residue Asn253 is glycosylated (N-linked (GlcNAc...) asparagine). LRR repeat units lie at residues Asn254–Leu277, Lys278–Leu301, Ser302–Leu325, Gln327–Leu349, and Thr350–Leu373. N-linked (GlcNAc...) asparagine glycans are attached at residues Asn279 and Asn300. An N-linked (GlcNAc...) asparagine glycan is attached at Asn348. One copy of the LRR 12; degenerate repeat lies at Ser374–Lys396. LRR repeat units lie at residues Ile397–Leu422, Leu425–Ser448, Thr454–Pro472, Ser473–Gly495, Arg496–Met519, Thr521–Ser542, Glu544–Tyr570, Ser572–Leu589, Ser590–Ser616, Ser618–Ala638, Thr639–Cys662, Ser664–Ser685, Gln687–Gly712, Phe713–Asn737, Leu785–Leu809, Lys810–Leu833, Lys834–Leu857, and Ser859–Arg882. N-linked (GlcNAc...) asparagine glycosylation is found at Asn434, Asn466, and Asn484. Asn529 carries an N-linked (GlcNAc...) asparagine glycan. N-linked (GlcNAc...) asparagine glycans are attached at residues Asn577, Asn603, Asn624, and Asn637. Asn737 carries N-linked (GlcNAc...) asparagine glycosylation. Residues Asn816, Asn845, and Asn864 are each glycosylated (N-linked (GlcNAc...) asparagine). The segment at Leu899 to Glu923 is disordered. The helical transmembrane segment at Ile931–Val951 threads the bilayer. The Cytoplasmic portion of the chain corresponds to Val952–Arg974.

This sequence belongs to the RLP family.

It is found in the cell membrane. This Arabidopsis thaliana (Mouse-ear cress) protein is Receptor-like protein 7.